Here is a 61-residue protein sequence, read N- to C-terminus: Potassium channel toxin alpha-KTx 6.8 (61 aa).

The N-terminal stretch at M1–G23 is a signal peptide. 4 cysteine pairs are disulfide-bonded: C29-C50, C35-C55, C39-C57, and C45-C60. At C60 the chain carries Cysteine amide.

This sequence belongs to the short scorpion toxin superfamily. Potassium channel inhibitor family. Alpha-KTx 06 subfamily. Expressed by the venom gland.

The protein resides in the secreted. Blocker of voltage-gated potassium channels. This is Potassium channel toxin alpha-KTx 6.8 from Opistophthalmus carinatus (African yellow leg scorpion).